The primary structure comprises 122 residues: Large ribosomal subunit protein uL14 (122 aa).

The protein belongs to the universal ribosomal protein uL14 family. In terms of assembly, part of the 50S ribosomal subunit. Forms a cluster with proteins L3 and L19. In the 70S ribosome, L14 and L19 interact and together make contacts with the 16S rRNA in bridges B5 and B8.

In terms of biological role, binds to 23S rRNA. Forms part of two intersubunit bridges in the 70S ribosome. This is Large ribosomal subunit protein uL14 from Beijerinckia indica subsp. indica (strain ATCC 9039 / DSM 1715 / NCIMB 8712).